A 248-amino-acid polypeptide reads, in one-letter code: Pulmonary surfactant-associated protein A (248 aa).

The N-terminal stretch at 1–20 is a signal peptide; the sequence is MLLCSLTLTLILLAVSGTKC. The 70-residue stretch at 31-100 folds into the Collagen-like domain; sequence GVPGIPGSPG…PGERGPPGPP (70 aa). Positions 34–105 are disordered; sequence GIPGSPGLPG…PPGPPAYPDE (72 aa). The span at 54 to 65 shows a compositional bias: pro residues; it reads PGPPGPIGPPGG. A compositionally biased stretch (basic and acidic residues) spans 84 to 93; the sequence is ERGDKGEPGE. The region spanning 134-247 is the C-type lectin domain; it reads VGEKVFSTNG…CLQYRLAICE (114 aa). Cystine bridges form between cysteine 155–cysteine 246 and cysteine 224–cysteine 238. Asparagine 207 is a glycosylation site (N-linked (GlcNAc...) asparagine). Residues glutamate 215, arginine 217, asparagine 234, and aspartate 235 each contribute to the Ca(2+) site.

Belongs to the SFTPA family. In terms of assembly, oligomeric complex of 6 set of homotrimers.

It is found in the secreted. The protein localises to the extracellular space. The protein resides in the extracellular matrix. Its subcellular location is the surface film. Its function is as follows. In presence of calcium ions, it binds to surfactant phospholipids and contributes to lower the surface tension at the air-liquid interface in the alveoli of the mammalian lung and is essential for normal respiration. Enhances the expression of MYO18A/SP-R210 on alveolar macrophages. The chain is Pulmonary surfactant-associated protein A (SFTPA1) from Equus caballus (Horse).